Reading from the N-terminus, the 372-residue chain is tRNA-specific 2-thiouridylase MnmA (372 aa).

Residues 16 to 23 (GMSGGVDS) and Met-42 contribute to the ATP site. The segment at 102 to 104 (NPD) is interaction with target base in tRNA. Cys-107 functions as the Nucleophile in the catalytic mechanism. Cys-107 and Cys-205 are oxidised to a cystine. Residue Gly-132 coordinates ATP. The segment at 155 to 157 (KDQ) is interaction with tRNA. The active-site Cysteine persulfide intermediate is the Cys-205. Positions 317–318 (RY) are interaction with tRNA.

This sequence belongs to the MnmA/TRMU family.

It localises to the cytoplasm. It catalyses the reaction S-sulfanyl-L-cysteinyl-[protein] + uridine(34) in tRNA + AH2 + ATP = 2-thiouridine(34) in tRNA + L-cysteinyl-[protein] + A + AMP + diphosphate + H(+). Functionally, catalyzes the 2-thiolation of uridine at the wobble position (U34) of tRNA, leading to the formation of s(2)U34. The chain is tRNA-specific 2-thiouridylase MnmA from Shewanella frigidimarina (strain NCIMB 400).